Consider the following 84-residue polypeptide: uncharacterized protein (84 aa).

The next 3 membrane-spanning stretches (helical) occupy residues 4-20 (AYVL…IKYG), 27-49 (VWKA…WIAF), and 59-81 (IGLA…VYVL).

The protein resides in the cell membrane. This is an uncharacterized protein from Archaeoglobus fulgidus (strain ATCC 49558 / DSM 4304 / JCM 9628 / NBRC 100126 / VC-16).